A 352-amino-acid chain; its full sequence is F-box/kelch-repeat protein At1g57790 (352 aa).

The F-box domain occupies 10-56; that stretch reads KNLWKDLPLELLSSVMTFLEIKDNVRASVVCKSWFEAAVSVRVIDKS. Kelch repeat units follow at residues 148–189 and 190–234; these read VVFT…HNNV and VFSN…WNEG.

This Arabidopsis thaliana (Mouse-ear cress) protein is F-box/kelch-repeat protein At1g57790.